The sequence spans 183 residues: uncharacterized protein (183 aa).

Residues 136–183 (EPPASVPSKQSGRSDKKKSTRKSPTFRNRPDFRKNKGRQLNKTTKQKK) form a disordered region. Residues 170–183 (NKGRQLNKTTKQKK) show a composition bias toward basic residues.

This is an uncharacterized protein from Homo sapiens (Human).